Here is a 242-residue protein sequence, read N- to C-terminus: Probable transcriptional regulatory protein BTH_I1015 (242 aa).

This sequence belongs to the TACO1 family.

It localises to the cytoplasm. This is Probable transcriptional regulatory protein BTH_I1015 from Burkholderia thailandensis (strain ATCC 700388 / DSM 13276 / CCUG 48851 / CIP 106301 / E264).